The primary structure comprises 798 residues: Tripartite terminase subunit 1 (798 aa).

The C3H1-type zinc-finger motif lies at 191–219; it reads CFQCYEELMAVPNQGRSINRRMQGLLCDH. Positions 416 to 429 are enriched in low complexity; that stretch reads AAGAARSRAEAASG. The tract at residues 416–458 is disordered; it reads AAGAARSRAEAASGAGAGGEEGAGAAAGRGNTGGDEGAGTTTA. Gly residues predominate over residues 430-452; it reads AGAGGEEGAGAAAGRGNTGGDEG. Residue 674 to 681 participates in ATP binding; it reads YNETFGKQ.

It belongs to the herpesviridae TRM1 protein family. Associates with TRM2 and TRM3 to form the tripartite terminase complex. Interacts with portal protein.

It is found in the host nucleus. Its function is as follows. Component of the molecular motor that translocates viral genomic DNA in empty capsid during DNA packaging. Forms a tripartite terminase complex together with TRM2 and TRM3 in the host cytoplasm. Once the complex reaches the host nucleus, it interacts with the capsid portal vertex. This portal forms a ring in which genomic DNA is translocated into the capsid. TRM1 carries an endonuclease activity that plays an important role for the cleavage of concatemeric viral DNA into unit length genomes. This is Tripartite terminase subunit 1 from Murid herpesvirus 1 (strain Smith) (MuHV-1).